A 198-amino-acid chain; its full sequence is Holliday junction branch migration complex subunit RuvA (198 aa).

The segment at 1-63 (MYDYIKGQLT…EDAHLLFGFH (63 aa)) is domain I. Positions 64-142 (TEDEKDVFLK…EAPQETGHTK (79 aa)) are domain II. The flexible linker stretch occupies residues 143-147 (ARSNK). The tract at residues 148–198 (AGNTQLDEAIEALLALGYKATELKKIRAFFEGTSETAEQYIKSALKLLMKG) is domain III.

Belongs to the RuvA family. Homotetramer. Forms an RuvA(8)-RuvB(12)-Holliday junction (HJ) complex. HJ DNA is sandwiched between 2 RuvA tetramers; dsDNA enters through RuvA and exits via RuvB. An RuvB hexamer assembles on each DNA strand where it exits the tetramer. Each RuvB hexamer is contacted by two RuvA subunits (via domain III) on 2 adjacent RuvB subunits; this complex drives branch migration. In the full resolvosome a probable DNA-RuvA(4)-RuvB(12)-RuvC(2) complex forms which resolves the HJ.

It is found in the cytoplasm. Functionally, the RuvA-RuvB-RuvC complex processes Holliday junction (HJ) DNA during genetic recombination and DNA repair, while the RuvA-RuvB complex plays an important role in the rescue of blocked DNA replication forks via replication fork reversal (RFR). RuvA specifically binds to HJ cruciform DNA, conferring on it an open structure. The RuvB hexamer acts as an ATP-dependent pump, pulling dsDNA into and through the RuvAB complex. HJ branch migration allows RuvC to scan DNA until it finds its consensus sequence, where it cleaves and resolves the cruciform DNA. The sequence is that of Holliday junction branch migration complex subunit RuvA from Streptococcus pyogenes serotype M6 (strain ATCC BAA-946 / MGAS10394).